The following is a 530-amino-acid chain: Arginine--tRNA ligase (530 aa).

The short motif at 113–123 (ANPTGPLHIGH) is the 'HIGH' region element.

The protein belongs to the class-I aminoacyl-tRNA synthetase family. As to quaternary structure, monomer.

Its subcellular location is the cytoplasm. The enzyme catalyses tRNA(Arg) + L-arginine + ATP = L-arginyl-tRNA(Arg) + AMP + diphosphate. In Campylobacter jejuni subsp. jejuni serotype O:6 (strain 81116 / NCTC 11828), this protein is Arginine--tRNA ligase.